The following is a 226-amino-acid chain: AA9 family lytic polysaccharide monooxygenase E (226 aa).

Residues 1-18 (MLANGAIVFLAAALGVSG) form the signal peptide. H19 is a binding site for Cu(2+). Disulfide bonds link C56/C174 and C144/C226. N69 carries N-linked (GlcNAc...) asparagine glycosylation. H86 is a Cu(2+) binding site. Positions 160 and 169 each coordinate O2. Y171 serves as a coordination point for Cu(2+).

Belongs to the polysaccharide monooxygenase AA9 family. Cu(2+) serves as cofactor.

Its subcellular location is the secreted. The catalysed reaction is [(1-&gt;4)-beta-D-glucosyl]n+m + reduced acceptor + O2 = 4-dehydro-beta-D-glucosyl-[(1-&gt;4)-beta-D-glucosyl]n-1 + [(1-&gt;4)-beta-D-glucosyl]m + acceptor + H2O.. Its function is as follows. Lytic polysaccharide monooxygenase (LPMO) that depolymerizes crystalline and amorphous polysaccharides via the oxidation of scissile alpha- or beta-(1-4)-glycosidic bonds, yielding C1 and C4 oxidation products. Catalysis by LPMOs requires the reduction of the active-site copper from Cu(II) to Cu(I) by a reducing agent and H(2)O(2) or O(2) as a cosubstrate. Shows endoglucanase activity on tamarind xyloglucan, as well as on beechwood xylan when combined with phosphoric acid swollen cellulose (PASC). Shows no activity on wheat arabinoxylan, konjac glucomannan, acetylated spruce galactoglucomannan, or cellopentaose. This is AA9 family lytic polysaccharide monooxygenase E from Thermothielavioides terrestris (strain ATCC 38088 / NRRL 8126) (Thielavia terrestris).